The following is a 1342-amino-acid chain: DNA-directed RNA polymerase subunit beta (1342 aa).

It belongs to the RNA polymerase beta chain family. The RNAP catalytic core consists of 2 alpha, 1 beta, 1 beta' and 1 omega subunit. When a sigma factor is associated with the core the holoenzyme is formed, which can initiate transcription.

It carries out the reaction RNA(n) + a ribonucleoside 5'-triphosphate = RNA(n+1) + diphosphate. Its function is as follows. DNA-dependent RNA polymerase catalyzes the transcription of DNA into RNA using the four ribonucleoside triphosphates as substrates. This is DNA-directed RNA polymerase subunit beta from Edwardsiella ictaluri (strain 93-146).